The sequence spans 506 residues: Cysteine protease 1 (506 aa).

The tract at residues 1 to 21 (MTSSRPSGRDSTGWQETVSNT) is disordered. Cys-226 acts as the Nucleophile in catalysis. Active-site residues include Asp-399 and His-401.

This sequence belongs to the peptidase C54 family.

Its subcellular location is the cytoplasm. It is found in the nucleus. The protein localises to the preautophagosomal structure. It carries out the reaction [protein]-C-terminal L-amino acid-glycyl-phosphatidylethanolamide + H2O = [protein]-C-terminal L-amino acid-glycine + a 1,2-diacyl-sn-glycero-3-phosphoethanolamine. In terms of biological role, cysteine protease that plays a key role in cytoplasm to vacuole transport (Cvt) and autophagy by mediating both proteolytic activation and delipidation of ATG8. Required for selective autophagic degradation of the nucleus (nucleophagy) as well as for mitophagy which contributes to regulate mitochondrial quantity and quality by eliminating the mitochondria to a basal level to fulfill cellular energy requirements and preventing excess ROS production. The protease activity is required for proteolytic activation of ATG8: cleaves the C-terminal amino acid of ATG8 to reveal a C-terminal glycine. ATG8 ubiquitin-like activity requires the exposure of the glycine at the C-terminus for its conjugation to phosphatidylethanolamine (PE) and its insertion to membranes, which is necessary for autophagy. The ATG8-PE conjugate mediates tethering between adjacent membranes and stimulates membrane hemifusion, leading to expansion of the autophagosomal membrane during autophagy. In addition to the protease activity, also catalyzes deconjugation of PE-conjugated forms of ATG8 during macroautophagy: ATG8 delipidation is required to release the protein from membranes, which facilitates multiple events during macroautophagy, and especially for efficient autophagosome biogenesis, the assembly of ATG9-containing tubulovesicular clusters into phagophores/autophagosomes, and for the disassembly of PAS-associated ATG components. ATG8 delipidation by ATG4 also recycles ATG8-PE generated on inappropriate membranes to maintain a reservoir of unlipidated ATG8 that is required for autophagosome formation at the PAS. This Neurospora crassa (strain ATCC 24698 / 74-OR23-1A / CBS 708.71 / DSM 1257 / FGSC 987) protein is Cysteine protease 1 (cpr-1).